The chain runs to 792 residues: Type 2 topoisomerase subunit B (792 aa).

A Toprim domain is found at 423–537 (CEIFLVEGDS…EGYVYIAEPP (115 aa)). Positions 429, 502, and 504 each coordinate Mg(2+).

The protein belongs to the type II topoisomerase GyrB family. As to quaternary structure, heterotetramer, composed of two GyrA and two GyrB chains. In the heterotetramer, 'GyrA' contains the active site tyrosine that forms a transient covalent intermediate with DNA, while 'GyrB' binds cofactors and catalyzes ATP hydrolysis. Requires Mg(2+) as cofactor. Mn(2+) is required as a cofactor. Ca(2+) serves as cofactor.

It localises to the cytoplasm. It carries out the reaction ATP-dependent breakage, passage and rejoining of double-stranded DNA.. Functionally, a type II topoisomerase. Despite its similarity to DNA gyrase, this enzyme is not able to supercoil DNA, and instead acts like topoisomerase IV. Relaxes both positively and negatively supercoiled DNA in an ATP-dependent fashion, decatenates interlocked circles. If this subunit is reconstituted with GyrA from E.coli the hybrid enzyme supercoils relaxed plasmid DNA; if paired with E.coli ParC supercoiling is not restored. This the first bacteria shown to not contain DNA gyrase, although it has 2 copies of a reverse gyrase that introduces positive supercoils. Type II topoisomerases break and join 2 DNA strands simultaneously in an ATP-dependent manner. The sequence is that of Type 2 topoisomerase subunit B from Aquifex aeolicus (strain VF5).